The chain runs to 363 residues: GDP-fucose transporter 1 (363 aa).

The next 8 helical transmembrane spans lie at 33–55, 75–97, 110–129, 139–161, 166–184, 194–213, 226–248, and 263–285; these read FLLR…ISMV, VTFY…ATCC, LKVA…MITF, VPFY…YLLL, SFYA…WLGI, SLTG…LNAI, IWRL…MIVL, and AHFW…VTGL.

This sequence belongs to the TPT transporter family. SLC35C subfamily.

The protein localises to the golgi apparatus membrane. The catalysed reaction is GMP(out) + GDP-beta-L-fucose(in) = GMP(in) + GDP-beta-L-fucose(out). In terms of biological role, antiporter specific for GDP-l-fucose and depending on the concomitant reverse transport of GMP. Involved in GDP-fucose import from the cytoplasm into the Golgi lumen. This chain is GDP-fucose transporter 1 (Slc35c1), found in Mus musculus (Mouse).